The primary structure comprises 330 residues: 5'-AMP-activated protein kinase subunit gamma-1 (330 aa).

Positions 1-21 (MESVAAESSPALENEHFQETP) are disordered. 3 CBS domains span residues 42 to 102 (PTSS…KSAL), 124 to 186 (SFKP…PKPE), and 197 to 259 (IGTY…NLDV). ADP-binding positions include Arg-69, 84–89 (MLTITD), Val-129, 150–151 (HR), and Lys-169. AMP-binding positions include Arg-69, 84–89 (MLTITD), Val-129, His-150, 150–151 (HR), Lys-169, Thr-199, Ala-204, 225–226 (SA), and 241–244 (SKFD). Residues Arg-69, 84 to 89 (MLTITD), Val-129, 150 to 151 (HR), Arg-151, and Lys-169 each bind ATP. The AMPK pseudosubstrate signature appears at 137–158 (LFDAVSSLIRNKIHRLPVIDPE). 241-244 (SKFD) serves as a coordination point for ADP. Position 241 to 244 (241 to 244 (SKFD)) interacts with ATP. Ser-260 is modified (phosphoserine; by ULK1). Residue Thr-262 is modified to Phosphothreonine; by ULK1. ADP is bound at residue Arg-268. Position 268 (Arg-268) interacts with AMP. Arg-268 contacts ATP. A Phosphoserine; by ULK1 modification is found at Ser-269. Positions 271–328 (YFEGVLKCYLHETLETIINRLVEAEVHRLVVVDEHDVVKGIVSLSDILQALVLTGGEK) constitute a CBS 4 domain. ADP-binding positions include Leu-276 and 297–298 (HR). Residues Leu-276, His-297, 297–298 (HR), and 313–316 (SLSD) each bind AMP. ATP is bound by residues Leu-276 and 297 to 298 (HR).

The protein belongs to the 5'-AMP-activated protein kinase gamma subunit family. In terms of assembly, AMPK is a heterotrimer of an alpha catalytic subunit (PRKAA1 or PRKAA2), a beta (PRKAB1 or PRKAB2) and a gamma non-catalytic subunits (PRKAG1, PRKAG2 or PRKAG3). Interacts with FNIP1 and FNIP2. In terms of processing, phosphorylated by ULK1 and ULK2; leading to negatively regulate AMPK activity and suggesting the existence of a regulatory feedback loop between ULK1, ULK2 and AMPK. Post-translationally, glycosylated; O-GlcNAcylated by OGT, promoting the AMP-activated protein kinase (AMPK) activity.

In terms of biological role, AMP/ATP-binding subunit of AMP-activated protein kinase (AMPK), an energy sensor protein kinase that plays a key role in regulating cellular energy metabolism. In response to reduction of intracellular ATP levels, AMPK activates energy-producing pathways and inhibits energy-consuming processes: inhibits protein, carbohydrate and lipid biosynthesis, as well as cell growth and proliferation. AMPK acts via direct phosphorylation of metabolic enzymes, and by longer-term effects via phosphorylation of transcription regulators. Also acts as a regulator of cellular polarity by remodeling the actin cytoskeleton; probably by indirectly activating myosin. Gamma non-catalytic subunit mediates binding to AMP, ADP and ATP, leading to activate or inhibit AMPK: AMP-binding results in allosteric activation of alpha catalytic subunit (PRKAA1 or PRKAA2) both by inducing phosphorylation and preventing dephosphorylation of catalytic subunits. ADP also stimulates phosphorylation, without stimulating already phosphorylated catalytic subunit. ATP promotes dephosphorylation of catalytic subunit, rendering the AMPK enzyme inactive. In Mus musculus (Mouse), this protein is 5'-AMP-activated protein kinase subunit gamma-1 (Prkag1).